A 183-amino-acid chain; its full sequence is Small ribosomal subunit protein uS4c (183 aa).

Positions 82–143 constitute an S4 RNA-binding domain; it reads MRLDNILFRL…KQRSKALIQN (62 aa).

The protein belongs to the universal ribosomal protein uS4 family. In terms of assembly, part of the 30S ribosomal subunit. Contacts protein S5. The interaction surface between S4 and S5 is involved in control of translational fidelity.

Its subcellular location is the plastid. It is found in the chloroplast. One of the primary rRNA binding proteins, it binds directly to 16S rRNA where it nucleates assembly of the body of the 30S subunit. Functionally, with S5 and S12 plays an important role in translational accuracy. The protein is Small ribosomal subunit protein uS4c (rps4) of Sparaxis sp. (strain Lejeune 1997).